Consider the following 903-residue polypeptide: Protein translocase subunit SecA (903 aa).

Residues Gln87, 105–109, and Asp507 contribute to the ATP site; that span reads GEGKT. Disordered stretches follow at residues 565–584 and 855–877; these read ESRR…GDPG and AEPG…LASQ. Zn(2+) is bound by residues Cys887, Cys889, Cys898, and His899.

Belongs to the SecA family. Monomer and homodimer. Part of the essential Sec protein translocation apparatus which comprises SecA, SecYEG and auxiliary proteins SecDF-YajC and YidC. Requires Zn(2+) as cofactor.

It is found in the cell inner membrane. The protein resides in the cytoplasm. It carries out the reaction ATP + H2O + cellular proteinSide 1 = ADP + phosphate + cellular proteinSide 2.. Its function is as follows. Part of the Sec protein translocase complex. Interacts with the SecYEG preprotein conducting channel. Has a central role in coupling the hydrolysis of ATP to the transfer of proteins into and across the cell membrane, serving both as a receptor for the preprotein-SecB complex and as an ATP-driven molecular motor driving the stepwise translocation of polypeptide chains across the membrane. The sequence is that of Protein translocase subunit SecA from Chromobacterium violaceum (strain ATCC 12472 / DSM 30191 / JCM 1249 / CCUG 213 / NBRC 12614 / NCIMB 9131 / NCTC 9757 / MK).